The following is a 2324-amino-acid chain: Myomegalin (2324 aa).

4 coiled-coil regions span residues 41–132, 158–205, 238–288, and 348–638; these read REDV…LVEA, QVKL…LLEE, DSHL…SLKE, and LFCS…NKQA. Disordered stretches follow at residues 72–96 and 205–240; these read TWAD…EPQQ and EPGG…SDSH. Residues 85-96 show a composition bias toward basic and acidic residues; that stretch reads AELRRQVEEPQQ. The span at 219-238 shows a compositional bias: polar residues; sequence PTQQKPDLNETPTTQPSVSD. The disordered stretch occupies residues 701 to 747; sequence PAGATSVGPHHGEQTDQGSTQMPSRDDSTSLTAREEASIPRSTLGDS. A Phosphothreonine modification is found at Thr-705. Residues 724-738 are compositionally biased toward basic and acidic residues; sequence SRDDSTSLTAREEAS. Coiled-coil stretches lie at residues 745 to 822, 855 to 923, and 1011 to 1043; these read GDSD…QLVD, ENRR…EEVL, and LRAE…GFSS. Disordered stretches follow at residues 1155–1182 and 1195–1216; these read LPSS…SLKL and NKSQ…STKH. Coiled-coil stretches lie at residues 1213–1241, 1346–1384, and 1430–1455; these read STKH…SEAT, TSDD…LSAT, and GLQA…PKTG. Disordered regions lie at residues 1540-1559, 1589-1610, 1628-1685, 1742-1773, 1857-1877, and 2081-2140; these read TDRL…KEEA, RFSS…SSTS, YTHY…IPKP, APPT…SPAR, LSST…GLES, and NQQP…TPPK. The Olduvai domain occupies 1550–1641; the sequence is KDHKSEKEEA…EEKKPSPSNS (92 aa). Composition is skewed to low complexity over residues 1591 to 1610 and 1637 to 1646; these read SSPP…SSTS and SPSNSAASAS. The span at 1743–1767 shows a compositional bias: polar residues; that stretch reads PPTSTSTLLSNHTEASSPRYSNPAQ. The stretch at 1821–2056 forms a coiled coil; the sequence is GADLLEEHLG…LRLQLEQQMD (236 aa). 2 stretches are compositionally biased toward polar residues: residues 2081-2090 and 2108-2135; these read NQQPPFQGSA and PSNS…SAAT. Positions 2248-2274 form a coiled coil; it reads EEGNLMEKELLDLRAQVSQQQQLLQST.

As to quaternary structure, interacts with PDE4D. May interact with MAPRE1 and MAPRE3. May form a pericentrosomal complex with AKAP9, CDK5RAP2 and EB1/MAPRE1 in an isoform-specific manner; within this complex, may mediate MAPRE1-binding to CDK5RAP2. Interaction with AKAP9 stabilizes both proteins. May interact with CAMSAP2 in an isoform-specific manner; this interaction is much stronger in the presence of AKAP9. In complex with AKAP9, recruits CAMSAP2 to the Golgi apparatus. May interact with unglycosylated LGALS3BP in an isoform-specific manner; this interaction may connect the pericentrosomal complex to the gamma-tubulin ring complex (gamma-TuRC) to promote microtubule assembly and acetylation. Abundantly expressed in heart and skeletal muscle and to a lower extent in brain, lung and liver. Expressed in heart, skeletal muscle and testis (at protein level).

It localises to the cytoplasm. The protein resides in the cytoskeleton. It is found in the microtubule organizing center. Its subcellular location is the centrosome. The protein localises to the golgi apparatus. Functionally, functions as an anchor sequestering components of the cAMP-dependent pathway to Golgi and/or centrosomes. May participate in microtubule dynamics, promoting microtubule assembly, in an isoform-specific manner. Depending upon the cell context, may act at the level of the Golgi apparatus or that of the centrosome. In complex with AKAP9, recruits CAMSAP2 to the Golgi apparatus and tethers non-centrosomal minus-end microtubules to the Golgi, an important step for polarized cell movement. In complex with AKAP9, EB1/MAPRE1 and CDK5RAP2, contributes to microtubules nucleation and extension from the centrosome to the cell periphery, a crucial process for directed cell migration, mitotic spindle orientation and cell-cycle progression. The polypeptide is Myomegalin (Pde4dip) (Rattus norvegicus (Rat)).